Consider the following 466-residue polypeptide: Cysteine--tRNA ligase (466 aa).

Cys27 contributes to the Zn(2+) binding site. The 'HIGH' region signature appears at 29–39 (PTVYNFFHIGN). The Zn(2+) site is built by Cys207, His232, and Glu236. Residues 264 to 268 (KMSKS) carry the 'KMSKS' region motif. Lys267 serves as a coordination point for ATP.

It belongs to the class-I aminoacyl-tRNA synthetase family. Monomer. Zn(2+) is required as a cofactor.

It is found in the cytoplasm. The catalysed reaction is tRNA(Cys) + L-cysteine + ATP = L-cysteinyl-tRNA(Cys) + AMP + diphosphate. This chain is Cysteine--tRNA ligase, found in Clostridium beijerinckii (strain ATCC 51743 / NCIMB 8052) (Clostridium acetobutylicum).